A 464-amino-acid polypeptide reads, in one-letter code: tRNA modification GTPase MnmE (464 aa).

(6S)-5-formyl-5,6,7,8-tetrahydrofolate-binding residues include Arg-26, Glu-92, and Arg-131. Residues 227-385 (GIKVAILGRV…LISALKDYVS (159 aa)) enclose the TrmE-type G domain. K(+) is bound at residue Asn-237. Residues 237 to 242 (NAGKSS), 256 to 262 (SNIAGTT), and 281 to 284 (DTAG) each bind GTP. Position 241 (Ser-241) interacts with Mg(2+). K(+) is bound by residues Ser-256, Ile-258, and Thr-261. Mg(2+) is bound at residue Thr-262. Lys-464 is a (6S)-5-formyl-5,6,7,8-tetrahydrofolate binding site.

This sequence belongs to the TRAFAC class TrmE-Era-EngA-EngB-Septin-like GTPase superfamily. TrmE GTPase family. Homodimer. Heterotetramer of two MnmE and two MnmG subunits. K(+) is required as a cofactor.

It localises to the cytoplasm. Functionally, exhibits a very high intrinsic GTPase hydrolysis rate. Involved in the addition of a carboxymethylaminomethyl (cmnm) group at the wobble position (U34) of certain tRNAs, forming tRNA-cmnm(5)s(2)U34. In Brachyspira hyodysenteriae (strain ATCC 49526 / WA1), this protein is tRNA modification GTPase MnmE.